A 767-amino-acid chain; its full sequence is Cilium assembly protein DZIP1L (767 aa).

The interval 122-144 is disordered; that stretch reads QQRGQQELGRQADELKGVREESR. The segment covering 131 to 144 has biased composition (basic and acidic residues); it reads RQADELKGVREESR. The C2H2-type zinc-finger motif lies at 166–189; it reads HTCHLCDKTFMNATFLRGHIQRRH. Positions 205 to 406 form a coiled coil; it reads VEEVLEELRA…SQEEMIQSLS (202 aa). Position 426 is a phosphoserine (S426). Residues 518–767 are disordered; the sequence is SRAKERQENG…SSGQPRVPAW (250 aa). 2 stretches are compositionally biased toward polar residues: residues 533 to 547 and 574 to 588; these read PDGQ…STLV and RQSH…TQVS. A compositionally biased stretch (low complexity) spans 607 to 616; the sequence is GPGMSTPPFS. Residues 658–675 show a composition bias toward polar residues; it reads ENAQPPGQGSGTLVQSMV. A compositionally biased stretch (basic and acidic residues) spans 677–686; that stretch reads NLEKQLEAPA.

This sequence belongs to the DZIP C2H2-type zinc-finger protein family. As to quaternary structure, interacts with SEPTIN2.

The protein resides in the cytoplasm. Its subcellular location is the cytoskeleton. It is found in the cilium basal body. The protein localises to the microtubule organizing center. It localises to the centrosome. The protein resides in the centriole. In terms of biological role, involved in primary cilium formation. Probably acts as a transition zone protein required for localization of PKD1/PC1 and PKD2/PC2 to the ciliary membrane. This chain is Cilium assembly protein DZIP1L, found in Homo sapiens (Human).